A 342-amino-acid chain; its full sequence is Holliday junction branch migration complex subunit RuvB (342 aa).

The tract at residues 4 to 182 (TDRLLSAGRR…FGIPIRLQFY (179 aa)) is large ATPase domain (RuvB-L). Residues Leu21, Arg22, Gly63, Lys66, Thr67, Thr68, Arg172, Tyr182, and Arg219 each coordinate ATP. Thr67 serves as a coordination point for Mg(2+). Residues 183–253 (TVEELERVVS…VADQSLNRLE (71 aa)) are small ATPAse domain (RuvB-S). Residues 256–342 (NLGLDAMDRR…EAGQDGLFDV (87 aa)) form a head domain (RuvB-H) region. The DNA site is built by Arg292, Arg311, and Arg316.

This sequence belongs to the RuvB family. Homohexamer. Forms an RuvA(8)-RuvB(12)-Holliday junction (HJ) complex. HJ DNA is sandwiched between 2 RuvA tetramers; dsDNA enters through RuvA and exits via RuvB. An RuvB hexamer assembles on each DNA strand where it exits the tetramer. Each RuvB hexamer is contacted by two RuvA subunits (via domain III) on 2 adjacent RuvB subunits; this complex drives branch migration. In the full resolvosome a probable DNA-RuvA(4)-RuvB(12)-RuvC(2) complex forms which resolves the HJ.

It localises to the cytoplasm. The catalysed reaction is ATP + H2O = ADP + phosphate + H(+). In terms of biological role, the RuvA-RuvB-RuvC complex processes Holliday junction (HJ) DNA during genetic recombination and DNA repair, while the RuvA-RuvB complex plays an important role in the rescue of blocked DNA replication forks via replication fork reversal (RFR). RuvA specifically binds to HJ cruciform DNA, conferring on it an open structure. The RuvB hexamer acts as an ATP-dependent pump, pulling dsDNA into and through the RuvAB complex. RuvB forms 2 homohexamers on either side of HJ DNA bound by 1 or 2 RuvA tetramers; 4 subunits per hexamer contact DNA at a time. Coordinated motions by a converter formed by DNA-disengaged RuvB subunits stimulates ATP hydrolysis and nucleotide exchange. Immobilization of the converter enables RuvB to convert the ATP-contained energy into a lever motion, pulling 2 nucleotides of DNA out of the RuvA tetramer per ATP hydrolyzed, thus driving DNA branch migration. The RuvB motors rotate together with the DNA substrate, which together with the progressing nucleotide cycle form the mechanistic basis for DNA recombination by continuous HJ branch migration. Branch migration allows RuvC to scan DNA until it finds its consensus sequence, where it cleaves and resolves cruciform DNA. The polypeptide is Holliday junction branch migration complex subunit RuvB (Rhizorhabdus wittichii (strain DSM 6014 / CCUG 31198 / JCM 15750 / NBRC 105917 / EY 4224 / RW1) (Sphingomonas wittichii)).